The sequence spans 148 residues: 15 kDa excretory/secretory protein (148 aa).

Residues 1–19 (MFFAFAVLLIALATREAYG) form the signal peptide.

To T.colubriformis 30 kDa antigenic glycoprotein.

Its subcellular location is the secreted. The protein is 15 kDa excretory/secretory protein of Haemonchus contortus (Barber pole worm).